The primary structure comprises 285 residues: Diaminopimelate epimerase (285 aa).

Substrate is bound by residues Asn-15 and Asn-68. The Proton donor role is filled by Cys-77. Substrate-binding positions include 78-79 (GN), Asn-165, Asn-201, and 219-220 (ER). Catalysis depends on Cys-228, which acts as the Proton acceptor. 229–230 (GT) contributes to the substrate binding site.

This sequence belongs to the diaminopimelate epimerase family. In terms of assembly, homodimer.

The protein localises to the cytoplasm. It carries out the reaction (2S,6S)-2,6-diaminopimelate = meso-2,6-diaminopimelate. The protein operates within amino-acid biosynthesis; L-lysine biosynthesis via DAP pathway; DL-2,6-diaminopimelate from LL-2,6-diaminopimelate: step 1/1. Catalyzes the stereoinversion of LL-2,6-diaminopimelate (L,L-DAP) to meso-diaminopimelate (meso-DAP), a precursor of L-lysine and an essential component of the bacterial peptidoglycan. This chain is Diaminopimelate epimerase, found in Synechococcus sp. (strain JA-3-3Ab) (Cyanobacteria bacterium Yellowstone A-Prime).